We begin with the raw amino-acid sequence, 402 residues long: MAKRSLAKLNTSDLSGKRVLVRVDFNVPLNDAGAITDDTRIRAALPTINDLIGKGAKVILAAHFGRPKGQVNDKMRLTPVATRLSELLSKPVTKTESCIGPDAEAKVNAMANGDVVLLENVRFFAEEEKNDADFAKQLAGLADVYVNDAFGAAHRAHASTEGVTKFLKPSVAGFLMEKELQYLQGAVDEPKRPLAAIVGGSKVSSKIGVLEALIDKCDKVLIGGGMIFTFYKARGLAVGKSLVEEDKLELAKELEAKAKAKGVELLLPTDVLLADNFAPDANSQVADVTAIPDGWMGLDIGPDAIKVFQAALADCKTVIWNGPMGVFEFDKFAAGTNAIATTLAELSGKGCCTIIGGGDSVAAVEKAGLAEKMSHISTGGGASLELLEGKVLPGVAALDDAA.

Residues 24 to 26 (DFN), Arg40, 63 to 66 (HFGR), Arg122, and Arg155 contribute to the substrate site. Residues Lys206, Gly297, Glu328, and 357 to 360 (GGDS) each bind ATP.

It belongs to the phosphoglycerate kinase family. As to quaternary structure, monomer.

The protein resides in the cytoplasm. It carries out the reaction (2R)-3-phosphoglycerate + ATP = (2R)-3-phospho-glyceroyl phosphate + ADP. Its pathway is carbohydrate degradation; glycolysis; pyruvate from D-glyceraldehyde 3-phosphate: step 2/5. This Synechococcus sp. (strain CC9311) protein is Phosphoglycerate kinase.